The sequence spans 434 residues: Enolase (434 aa).

Glutamine 163 contributes to the (2R)-2-phosphoglycerate binding site. Glutamate 205 functions as the Proton donor in the catalytic mechanism. Aspartate 242, glutamate 291, and aspartate 318 together coordinate Mg(2+). (2R)-2-phosphoglycerate contacts are provided by lysine 343, arginine 372, serine 373, and lysine 394. The active-site Proton acceptor is lysine 343.

It belongs to the enolase family. The cofactor is Mg(2+).

It localises to the cytoplasm. The protein resides in the secreted. Its subcellular location is the cell surface. It is found in the cell wall. It catalyses the reaction (2R)-2-phosphoglycerate = phosphoenolpyruvate + H2O. The protein operates within carbohydrate degradation; glycolysis; pyruvate from D-glyceraldehyde 3-phosphate: step 4/5. Functionally, catalyzes the reversible conversion of 2-phosphoglycerate (2-PG) into phosphoenolpyruvate (PEP). It is essential for the degradation of carbohydrates via glycolysis. The chain is Enolase from Streptococcus pneumoniae serotype 2 (strain D39 / NCTC 7466).